A 3712-amino-acid chain; its full sequence is Laminin subunit alpha (3712 aa).

Positions 1–22 (MGHGVASIGALLVILAISYCQA) are cleaved as a signal peptide. The Laminin N-terminal domain occupies 23-272 (ELTPPYFNLA…SIKDISIGGR (250 aa)). N116 and N219 each carry an N-linked (GlcNAc...) asparagine glycan. 43 disulfides stabilise this stretch: C273-C282, C275-C296, C298-C307, C310-C330, C333-C342, C335-C367, C370-C379, C382-C400, C403-C414, C405-C421, C423-C432, C435-C445, C448-C460, C450-C468, C470-C479, C482-C492, C495-C507, C497-C514, C516-C525, C528-C538, C541-C553, C543-C560, C562-C571, C574-C584, C587-C599, C589-C605, C607-C616, C619-C629, C632-C644, C634-C650, C652-C661, C664-C674, C677-C691, C679-C700, C702-C711, C714-C729, C732-C746, C734-C753, C755-C764, C767-C782, C785-C797, C787-C804, and C806-C815. 10 consecutive Laminin EGF-like domains span residues 273–332 (CMCN…NCEP), 333–402 (CNCH…VCSP), 403–447 (CQCD…NCRE), 448–494 (CECN…ECKA), 495–540 (CECN…TCSY), 541–586 (CDCD…DCKP), 587–631 (CNCS…DCLP), 632–676 (CHCD…SCED), 677–731 (CNCD…GCEI), and 732–784 (CDCW…GCKD). N395 is a glycosylation site (N-linked (GlcNAc...) asparagine). N453 is a glycosylation site (N-linked (GlcNAc...) asparagine). N508 is a glycosylation site (N-linked (GlcNAc...) asparagine). N-linked (GlcNAc...) asparagine glycosylation is present at N588. A glycan (N-linked (GlcNAc...) asparagine) is linked at N722. A Laminin EGF-like 11; truncated domain is found at 785–815 (CSCDVGGSWQSVCDKISGQCKCHPRITGLAC). The segment at 816-1374 (TQPLTTHFFP…TADYNSGALP (559 aa)) is domain IV''. 2 N-linked (GlcNAc...) asparagine glycosylation sites follow: N897 and N1352. Intrachain disulfides connect C1375–C1387, C1377–C1394, C1396–C1405, C1408–C1418, C1421–C1429, C1423–C1436, C1438–C1447, C1450–C1463, C1466–C1480, C1468–C1487, C1489–C1498, C1501–C1511, C1514–C1526, C1516–C1533, C1535–C1544, and C1547–C1562. Laminin EGF-like domains are found at residues 1375–1420 (CNCD…DCKP), 1421–1465 (CKCP…GCEE), 1466–1513 (CACN…HCEQ), and 1514–1564 (CSCH…GCTT). N-linked (GlcNAc...) asparagine glycosylation occurs at N1484. In terms of domain architecture, Laminin EGF-like 16; first part spans 1565–1574 (CFCFGKTSRC). 2 N-linked (GlcNAc...) asparagine glycosylation sites follow: N1583 and N1617. The Laminin IV type A domain maps to 1585–1775 (SLLKHVSITT…GEYQFLAVER (191 aa)). The region spanning 1776-1808 (CSCPPGYSGHSCEDCAPGYYRDPSGPYGGYCIP) is the Laminin EGF-like 16; second part domain. Cystine bridges form between C1778-C1787, C1790-C1806, C1809-C1818, C1811-C1825, C1828-C1837, C1840-C1856, C1859-C1874, C1861-C1885, C1887-C1896, C1899-C1914, C1917-C1931, C1919-C1938, C1941-C1950, C1953-C1967, C1970-C1980, C1972-C1987, C1989-C1998, C2001-C2014, C2017-C2028, C2019-C2035, C2037-C2046, C2049-C2061, C2064-C2076, C2066-C2083, C2085-C2094, and C2097-C2109. Laminin EGF-like domains are found at residues 1809 to 1858 (CECN…DCMI), 1859 to 1916 (CACP…VCKP), 1917 to 1969 (CECS…NCQS), 1970 to 2016 (CDCD…GCRA), 2017 to 2063 (CDCG…GCTP), and 2064 to 2111 (CNCN…GCQE). Residue N1847 is glycosylated (N-linked (GlcNAc...) asparagine). N1943 carries an N-linked (GlcNAc...) asparagine glycan. Residue N2024 is glycosylated (N-linked (GlcNAc...) asparagine). Residues 2112–2671 (CNNCHHALLD…EAARQLANSI (560 aa)) form a domain II and I region. Residues 2178 to 2249 (KKANSELESD…LSKNLEAAAS (72 aa)) adopt a coiled-coil conformation. Residues N2196, N2215, N2267, N2301, and N2323 are each glycosylated (N-linked (GlcNAc...) asparagine). Positions 2301–2321 (NKSLNALKNDIGEFSDHLEDL) form a coiled coil. Positions 2376-2450 (DLTLNQINQK…QYTDMTASAE (75 aa)) form a coiled coil. 9 N-linked (GlcNAc...) asparagine glycosylation sites follow: N2482, N2524, N2538, N2569, N2699, N2720, N2890, N2938, and N3010. A coiled-coil region spans residues 2541–2676 (EHQLKDINKL…LANSIKVGVN (136 aa)). Laminin G-like domains lie at 2672–2868 (KVGV…ERDV), 2876–3048 (VTGL…EEGC), and 3055–3223 (VVSY…INGC). C3022 and C3048 are joined by a disulfide. An N-linked (GlcNAc...) asparagine glycan is attached at N3070. C3196 and C3223 are joined by a disulfide. A disordered region spans residues 3244–3297 (NEVESPWSNADTLPPLKPDIESTLPPTTPTTTTTTTTTTTSTTTTSTTTTTTTP). The segment covering 3265–3297 (STLPPTTPTTTTTTTTTTTSTTTTSTTTTTTTP) has biased composition (low complexity). 2 consecutive Laminin G-like domains span residues 3349-3528 (GYRF…VVPC) and 3534-3709 (RGLF…QGYC). An N-linked (GlcNAc...) asparagine glycan is attached at N3491. The cysteines at positions 3505 and 3528 are disulfide-linked. N3612 carries N-linked (GlcNAc...) asparagine glycosylation. A disulfide bridge connects residues C3682 and C3709.

Laminin is a complex glycoprotein, consisting of three different polypeptide chains (alpha, beta, gamma), which are bound to each other by disulfide bonds into a cross-shaped molecule comprising one long and three short arms with globules at each end. Newly formed mesoderm and later prominently expressed in hemocytes, which also synthesize collagen IV. Expressed in muscles.

Its subcellular location is the secreted. The protein resides in the extracellular space. It is found in the extracellular matrix. It localises to the basement membrane. The protein localises to the synapse. Its subcellular location is the cell projection. The protein resides in the axon. It is found in the cytoplasmic vesicle. It localises to the secretory vesicle. The protein localises to the synaptic vesicle. Its function is as follows. Binding to cells via a high affinity receptor, laminin is thought to mediate the attachment, migration and organization of cells into tissues during embryonic development by interacting with other extracellular matrix components. Activates presynaptic signaling involving integrin alpha-PS3/beta-nu and Fak to suppress neuromuscular junction (NMJ) growth during larval development and during low crawling activity, but not during higher-crawling conditions. Mediates, together with integrin alpha-PS3/beta-nu, glutamate receptor-modulated NMJ growth. This chain is Laminin subunit alpha (LanA), found in Drosophila melanogaster (Fruit fly).